Consider the following 869-residue polypeptide: MFRVLNKVFDTNQRDVQRIVKTVVQPVNALEEETMKIENLAEAFMRLRQRVQEGGESLDDVLVPAFALIREAGRRAIGKRHYDVQLIGGTALHQGRIAEMRTGEGKTLVATLALALNALEGKGAHLVTVNDYLARVGAEEMGLLYRTLGLSVGLITRDMQPHQRQAAYACDITYVTNSELGFDYLRDNMAQSREQLVLRADNPLHYAIVDEVDSILIDEARTPLIISGAAEKATDLYYVYAKLVKRLQRGEPAEPGKRTEPTGDYTIDEKGKQVHLTEQGIAKIERLLSLGDLYSPENMDKAHMITQAIRARELYHREKDYIVNAEGEVVIIDEFTGRSMPGRRYGEGLHQAIEAKEGVKIENENQTLATITYQNFFRLYDKFAGMTGTAKTEEKEFLDIYGSDVLVIPTNKPVIRQDADDLVYRTRMGKYQAVVEEVKQMHATGRPILIGTASIDTSEQLSALLKQAGIRHSVLNAKYEAQEASIIAQAGRSGTVTIATNMAGRGTDIMLGGNAEFILGEAIEQNFGISRFTPEAEAFIKAIGREDPEAVTLGLRIPGMTEQFIRQAQQLQKDIIADRERVRELGGLHIIGTERHESRRIDNQLRGRAGRQGDPGSSRFYVSFEDDLMRLFASDRVVAMMDRLGMDDTQPIEAKMVTGAIERAQARVEDRNFGIRKQLLEFDNVMSKQRDIIYAQRREVLLGTDEDVEESTEGMIADFTEMQLAFYAPIDQPAESWDLETLRTNMLEAVPQLEHYDFEALRHMAPEAAHAHLLEAVADAFDARKAELGPTMLNSLARYVLLQVVDQHWKEHLHGMDVLRQGIGLRGYGQRDPFTEYKFEATNMFNDMIDNLKADVTKFIFRMQFGQAS.

ATP contacts are provided by residues Gln-85, 103–107 (GEGKT), and Asp-508.

It belongs to the SecA family. Monomer and homodimer. Part of the essential Sec protein translocation apparatus which comprises SecA, SecYEG and auxiliary proteins SecDF. Other proteins may also be involved.

The protein resides in the cell membrane. The protein localises to the cytoplasm. It carries out the reaction ATP + H2O + cellular proteinSide 1 = ADP + phosphate + cellular proteinSide 2.. Part of the Sec protein translocase complex. Interacts with the SecYEG preprotein conducting channel. Has a central role in coupling the hydrolysis of ATP to the transfer of proteins into and across the cell membrane, serving as an ATP-driven molecular motor driving the stepwise translocation of polypeptide chains across the membrane. This Deinococcus geothermalis (strain DSM 11300 / CIP 105573 / AG-3a) protein is Protein translocase subunit SecA.